Here is a 248-residue protein sequence, read N- to C-terminus: Adenosylcobinamide-GDP ribazoletransferase (248 aa).

Transmembrane regions (helical) follow at residues 24–44 (EINLKKGSALLPFVGVIIGAW), 70–90 (VIITGGFHVDALADTADGLFS), 106–126 (VGANGVIAICFYFLFYGALFL), 134–154 (ICWLFFVLPIVAKGVTMLLFA), 168–188 (IFLGVPWWPIVIAQVIVLAVL), 189–209 (GLFFSYVGVIAYVGVILFTII), and 228–248 (AGGQMGQLICLFCLVLLWGLV).

It belongs to the CobS family. Mg(2+) is required as a cofactor.

The protein resides in the cell membrane. It catalyses the reaction alpha-ribazole + adenosylcob(III)inamide-GDP = adenosylcob(III)alamin + GMP + H(+). The enzyme catalyses alpha-ribazole 5'-phosphate + adenosylcob(III)inamide-GDP = adenosylcob(III)alamin 5'-phosphate + GMP + H(+). It functions in the pathway cofactor biosynthesis; adenosylcobalamin biosynthesis; adenosylcobalamin from cob(II)yrinate a,c-diamide: step 7/7. Functionally, joins adenosylcobinamide-GDP and alpha-ribazole to generate adenosylcobalamin (Ado-cobalamin). Also synthesizes adenosylcobalamin 5'-phosphate from adenosylcobinamide-GDP and alpha-ribazole 5'-phosphate. This chain is Adenosylcobinamide-GDP ribazoletransferase, found in Listeria monocytogenes serovar 1/2a (strain ATCC BAA-679 / EGD-e).